Consider the following 314-residue polypeptide: Dihydropteroate synthase (314 aa).

Residues 10 to 294 form the Pterin-binding domain; sequence TVICGIINVT…DVASHRMAVE (285 aa). Asparagine 17 contributes to the Mg(2+) binding site. Residues aspartate 91, asparagine 110, aspartate 201, lysine 237, and 282–284 contribute to the (7,8-dihydropterin-6-yl)methyl diphosphate site; that span reads RVH.

Belongs to the DHPS family. As to quaternary structure, homodimer. Mg(2+) serves as cofactor.

It carries out the reaction (7,8-dihydropterin-6-yl)methyl diphosphate + 4-aminobenzoate = 7,8-dihydropteroate + diphosphate. The protein operates within cofactor biosynthesis; tetrahydrofolate biosynthesis; 7,8-dihydrofolate from 2-amino-4-hydroxy-6-hydroxymethyl-7,8-dihydropteridine diphosphate and 4-aminobenzoate: step 1/2. Is potently inhibited by sulfonamides, with Ki values between 25 nM and 850 nM. Its function is as follows. Catalyzes the condensation of para-aminobenzoate (pABA) with 6-hydroxymethyl-7,8-dihydropterin diphosphate (DHPt-PP) to form 7,8-dihydropteroate, the immediate precursor of folate derivatives. Is the target for the sulfonamide group of antimicrobial drugs. Sulfonamide drugs act as pABA analogs, they inhibit the reaction by acting as alternative substrates, leading to a 'dead end' sulfa-pterin product. The chain is Dihydropteroate synthase (sulA) from Streptococcus pneumoniae (strain ATCC BAA-255 / R6).